We begin with the raw amino-acid sequence, 389 residues long: Phospho-N-acetylmuramoyl-pentapeptide-transferase (389 aa).

Helical transmembrane passes span 25–45 (RAVM…PWVI), 73–93 (TMGG…WGDL), 97–117 (FIWI…VDDY), 135–155 (FWQS…VSEA), 190–210 (ISYP…IVGA), 222–242 (GLVI…AYVM), 258–278 (GAGE…AFLW), 286–306 (VFMG…VAVI), 311–331 (IVLF…MLQV), and 366–386 (QVVV…LSTL).

Belongs to the glycosyltransferase 4 family. MraY subfamily. The cofactor is Mg(2+).

The protein localises to the cell inner membrane. It carries out the reaction UDP-N-acetyl-alpha-D-muramoyl-L-alanyl-gamma-D-glutamyl-meso-2,6-diaminopimeloyl-D-alanyl-D-alanine + di-trans,octa-cis-undecaprenyl phosphate = di-trans,octa-cis-undecaprenyl diphospho-N-acetyl-alpha-D-muramoyl-L-alanyl-D-glutamyl-meso-2,6-diaminopimeloyl-D-alanyl-D-alanine + UMP. The protein operates within cell wall biogenesis; peptidoglycan biosynthesis. In terms of biological role, catalyzes the initial step of the lipid cycle reactions in the biosynthesis of the cell wall peptidoglycan: transfers peptidoglycan precursor phospho-MurNAc-pentapeptide from UDP-MurNAc-pentapeptide onto the lipid carrier undecaprenyl phosphate, yielding undecaprenyl-pyrophosphoryl-MurNAc-pentapeptide, known as lipid I. The polypeptide is Phospho-N-acetylmuramoyl-pentapeptide-transferase (Burkholderia vietnamiensis (strain G4 / LMG 22486) (Burkholderia cepacia (strain R1808))).